The sequence spans 139 residues: Large ribosomal subunit protein uL22 (139 aa).

Residues 1 to 21 (MTAPEQTYRNKKQRKQQHKLR) are disordered. Positions 9-21 (RNKKQRKQQHKLR) are enriched in basic residues.

The protein belongs to the universal ribosomal protein uL22 family. In terms of assembly, part of the 50S ribosomal subunit.

This protein binds specifically to 23S rRNA; its binding is stimulated by other ribosomal proteins, e.g. L4, L17, and L20. It is important during the early stages of 50S assembly. It makes multiple contacts with different domains of the 23S rRNA in the assembled 50S subunit and ribosome. Its function is as follows. The globular domain of the protein is located near the polypeptide exit tunnel on the outside of the subunit, while an extended beta-hairpin is found that lines the wall of the exit tunnel in the center of the 70S ribosome. This is Large ribosomal subunit protein uL22 from Deinococcus geothermalis (strain DSM 11300 / CIP 105573 / AG-3a).